An 859-amino-acid chain; its full sequence is Fanconi anemia group B protein (859 aa).

An N-acetylthreonine modification is found at threonine 2.

Belongs to the multisubunit FA complex composed of FANCA, FANCB, FANCC, FANCE, FANCF, FANCG, FANCL/PHF9 and FANCM. The complex is not found in FA patients.

Its subcellular location is the nucleus. Its function is as follows. DNA repair protein required for FANCD2 ubiquitination. The chain is Fanconi anemia group B protein (FANCB) from Homo sapiens (Human).